We begin with the raw amino-acid sequence, 603 residues long: Methionine--tRNA ligase (603 aa).

The short motif at 14–24 (PYANGPRHIGH) is the 'HIGH' region element. Positions 146, 149, 159, and 162 each coordinate Zn(2+). The short motif at 354–358 (KFSSS) is the 'KMSKS' region element. S357 contacts ATP.

Belongs to the class-I aminoacyl-tRNA synthetase family. MetG type 1 subfamily. In terms of assembly, monomer. The cofactor is Zn(2+).

Its subcellular location is the cytoplasm. The catalysed reaction is tRNA(Met) + L-methionine + ATP = L-methionyl-tRNA(Met) + AMP + diphosphate. Functionally, is required not only for elongation of protein synthesis but also for the initiation of all mRNA translation through initiator tRNA(fMet) aminoacylation. The protein is Methionine--tRNA ligase of Salinispora tropica (strain ATCC BAA-916 / DSM 44818 / JCM 13857 / NBRC 105044 / CNB-440).